The primary structure comprises 286 residues: Thymidylate synthase (286 aa).

Residue 140 to 141 (RR) coordinates dUMP. Cys161 acts as the Nucleophile in catalysis. Residues 185-188 (RSND), Asn196, and 226-228 (HIY) each bind dUMP. Asp188 is a (6R)-5,10-methylene-5,6,7,8-tetrahydrofolate binding site. Residue Ala285 coordinates (6R)-5,10-methylene-5,6,7,8-tetrahydrofolate.

Belongs to the thymidylate synthase family. Bacterial-type ThyA subfamily. In terms of assembly, homodimer.

It localises to the cytoplasm. It catalyses the reaction dUMP + (6R)-5,10-methylene-5,6,7,8-tetrahydrofolate = 7,8-dihydrofolate + dTMP. It participates in pyrimidine metabolism; dTTP biosynthesis. Functionally, catalyzes the reductive methylation of 2'-deoxyuridine-5'-monophosphate (dUMP) to 2'-deoxythymidine-5'-monophosphate (dTMP) while utilizing 5,10-methylenetetrahydrofolate (mTHF) as the methyl donor and reductant in the reaction, yielding dihydrofolate (DHF) as a by-product. This enzymatic reaction provides an intracellular de novo source of dTMP, an essential precursor for DNA biosynthesis. This chain is Thymidylate synthase, found in Streptococcus thermophilus (strain ATCC BAA-250 / LMG 18311).